We begin with the raw amino-acid sequence, 410 residues long: BTB/POZ and MATH domain-containing protein 5 (410 aa).

Positions 1–24 are disordered; the sequence is MSESVIQGSNPDRVLSPTSSKSVT. The region spanning 28 to 162 is the MATH domain; that stretch reads NGSHQFVIQG…DDCLIINCTV (135 aa). Residues 198–264 form the BTB domain; the sequence is SDITFNIAGE…MYKDSLPEDV (67 aa).

It belongs to the Tdpoz family. Heterodimer with BPM1 and BPM3. Interacts with RAP2-4. Binds to MYB56 at the promoter of FLOWERING LOCUS T (FT). As to expression, ubiquitous.

It localises to the nucleus. The protein localises to the cytoplasm. The protein operates within protein modification; protein ubiquitination. Its function is as follows. May act as a substrate-specific adapter of an E3 ubiquitin-protein ligase complex (CUL3-RBX1-BTB) which mediates the ubiquitination and subsequent proteasomal degradation of target proteins. This Arabidopsis thaliana (Mouse-ear cress) protein is BTB/POZ and MATH domain-containing protein 5 (BPM5).